The sequence spans 438 residues: MRTLLPPALLTCWLLAPVNSIHPECRFHLEIQEEETKCAELLRSQTEKHKACSGVWDNITCWRPANVGETVTVPCPKVFSNFYSKAGNISKNCTSDGWSETFPDFVDACGYSDPEDESKITFYILVKAIYTLGYSVSLMSLATGSIILCLFRKLHCTRNYIHLNLFLSFILRAISVLVKDDVLYSSSGTLHCPDQPSSWVGCKLSLVFLQYCIMANFFWLLVEGLYLHTLLVAMLPPRRCFLAYLLIGWGLPTVCIGAWTAARLYLEDTGCWDTNDHSVPWWVIRIPILISIIVNFVLFISIIRILLQKLTSPDVGGNDQSQYKRLAKSTLLLIPLFGVHYMVFAVFPISISSKYQILFELCLGSFQGLVVAVLYCFLNSEVQCELKRKWRSRCPTPSASRDYRVCGSSFSRNGSEGALQFHRGSRAQSFLQTETSVI.

The N-terminal stretch at 1–23 (MRTLLPPALLTCWLLAPVNSIHP) is a signal peptide. At 24 to 124 (ECRFHLEIQE…EDESKITFYI (101 aa)) the chain is on the extracellular side. Cystine bridges form between C38/C61, C52/C93, and C75/C109. N-linked (GlcNAc...) asparagine glycans are attached at residues N58, N88, and N92. Residues 125-150 (LVKAIYTLGYSVSLMSLATGSIILCL) traverse the membrane as a helical segment. At 151-158 (FRKLHCTR) the chain is on the cytoplasmic side. Residues 159-180 (NYIHLNLFLSFILRAISVLVKD) traverse the membrane as a helical segment. Residues 181–203 (DVLYSSSGTLHCPDQPSSWVGCK) lie on the Extracellular side of the membrane. A disulfide bridge links C202 with C271. Residues 204–228 (LSLVFLQYCIMANFFWLLVEGLYLH) traverse the membrane as a helical segment. The Cytoplasmic segment spans residues 229-239 (TLLVAMLPPRR). Residues 240–261 (CFLAYLLIGWGLPTVCIGAWTA) form a helical membrane-spanning segment. Topologically, residues 262 to 280 (ARLYLEDTGCWDTNDHSVP) are extracellular. A helical transmembrane segment spans residues 281–304 (WWVIRIPILISIIVNFVLFISIIR). Residues 305 to 325 (ILLQKLTSPDVGGNDQSQYKR) lie on the Cytoplasmic side of the membrane. Residues 326–346 (LAKSTLLLIPLFGVHYMVFAV) traverse the membrane as a helical segment. Over 347-354 (FPISISSK) the chain is Extracellular. Residues 355–378 (YQILFELCLGSFQGLVVAVLYCFL) traverse the membrane as a helical segment. The Cytoplasmic portion of the chain corresponds to 379–438 (NSEVQCELKRKWRSRCPTPSASRDYRVCGSSFSRNGSEGALQFHRGSRAQSFLQTETSVI).

This sequence belongs to the G-protein coupled receptor 2 family. In terms of assembly, interacts with ADCYAP1/PACAP (via N-terminal extracellular domain); activated by PACAP27 and CAPAC38 neuropeptides. Interacts with VIP; the interaction results in VIPR1 activation. Expressed in CD4+ T-cells, but not in CD8+ T-cells. Expressed in the T-cell lines Jurkat, Peer, MOLT-4, HSB, YT and SUP-T1, but not in the T-cell lines HARRIS and HuT 78.

Its subcellular location is the cell membrane. Its function is as follows. G protein-coupled receptor activated by the neuropeptides vasoactive intestinal peptide (VIP) and pituitary adenylate cyclase-activating polypeptide (ADCYAP1/PACAP). Binds VIP and both PACAP27 and PACAP38 bioactive peptides with the following order of potency PACAP38 = VIP &gt; PACAP27. Ligand binding causes a conformation change that triggers signaling via guanine nucleotide-binding proteins (G proteins) and modulates the activity of downstream effectors. Activates cAMP-dependent pathway. May be coupled to phospholipase C. The protein is Vasoactive intestinal polypeptide receptor 2 of Homo sapiens (Human).